Reading from the N-terminus, the 829-residue chain is G-type lectin S-receptor-like serine/threonine-protein kinase At1g34300 (829 aa).

The N-terminal stretch at 1–25 is a signal peptide; that stretch reads MAVKTPFLKLLPLLLLLLHFPFSFS. 2 consecutive Bulb-type lectin domains span residues 26-140 and 143-260; these read TIPL…SSFD and TDTI…PVNA. Topologically, residues 26-421 are extracellular; sequence TIPLGSVIYA…KGDDNNSKVH (396 aa). N-linked (GlcNAc...) asparagine glycans are attached at residues Asn-46, Asn-98, Asn-130, Asn-151, Asn-172, Asn-178, Asn-189, and Asn-195. Residues 264–301 form the EGF-like domain; the sequence is AVDQCLVYGYCGNFGICSYNDTNPICSCPSRNFDFVDV. 5 disulfides stabilise this stretch: Cys-268–Cys-280, Cys-274–Cys-289, Cys-317–Cys-399, Cys-350–Cys-373, and Cys-354–Cys-360. Residues Asn-283 and Asn-320 are each glycosylated (N-linked (GlcNAc...) asparagine). The Apple domain occupies 317 to 399; the sequence is CSGNTTMLDL…VPSTSYVKVC (83 aa). A glycan (N-linked (GlcNAc...) asparagine) is linked at Asn-416. A helical membrane pass occupies residues 422-442; sequence LWIVAVAVIAGLLGLVAVEIG. At 443–829 the chain is on the cytoplasmic side; the sequence is LWWCCCRKNP…RISEGSMLGS (387 aa). A Protein kinase domain is found at 484–759; sequence KSFKEKLGAG…GKVVQMLEGI (276 aa). ATP contacts are provided by residues 490 to 498 and Lys-512; that span reads LGAGGFGTV. Ser-532 is modified (phosphoserine). A caM-binding region spans residues 572-589; the sequence is DSAKFLTWEYRFNIALGT. Catalysis depends on Asp-608, which acts as the Proton acceptor. Phosphoserine is present on residues Ser-625 and Ser-799.

It belongs to the protein kinase superfamily. Ser/Thr protein kinase family.

It localises to the cell membrane. The enzyme catalyses L-seryl-[protein] + ATP = O-phospho-L-seryl-[protein] + ADP + H(+). The catalysed reaction is L-threonyl-[protein] + ATP = O-phospho-L-threonyl-[protein] + ADP + H(+). The polypeptide is G-type lectin S-receptor-like serine/threonine-protein kinase At1g34300 (Arabidopsis thaliana (Mouse-ear cress)).